Here is an 83-residue protein sequence, read N- to C-terminus: Polcalcin Bra r 2 (83 aa).

EF-hand domains lie at 5–40 (TEKAEHDRIFKKFDANGDGKISASELGDALKNLGSV) and 43–75 (DDIKRMMAEIDTDGDGYISYQEFSDFASANRGL). Positions 18, 20, 22, 24, 29, 53, 55, 57, 59, and 64 each coordinate Ca(2+).

The chain is Polcalcin Bra r 2 from Brassica campestris (Field mustard).